The primary structure comprises 358 residues: Cyclin-dependent kinase 10 (358 aa).

A Protein kinase domain is found at 37–321; sequence FEKLNRIGEG…AGDCLESSYF (285 aa). Residues 43–51 and Lys66 each bind ATP; that span reads IGEGTYGIV. The active-site Proton acceptor is Asp161. Position 194 is a phosphothreonine (Thr194). Positions 332–358 are disordered; sequence LMPTFPHHRNKRAAPAATEGQSKRCRP.

This sequence belongs to the protein kinase superfamily. CMGC Ser/Thr protein kinase family. CDC2/CDKX subfamily. Heterodimer with CCNQ, the interaction is required for kinase activity. Interacts with ETS2. Interacts with PRK2.

The protein localises to the cytoplasm. It is found in the cytoskeleton. The protein resides in the cilium basal body. The enzyme catalyses L-seryl-[protein] + ATP = O-phospho-L-seryl-[protein] + ADP + H(+). It catalyses the reaction L-threonyl-[protein] + ATP = O-phospho-L-threonyl-[protein] + ADP + H(+). Functionally, cyclin-dependent kinase that phosphorylates the transcription factor ETS2 (in vitro) and positively controls its proteasomal degradation (in cells). Involved in the regulation of actin cytoskeleton organization through the phosphorylation of actin dynamics regulators such as PKN2. Is a negative regulator of ciliogenesis through phosphorylation of PKN2 and promotion of RhoA signaling. In Rattus norvegicus (Rat), this protein is Cyclin-dependent kinase 10 (Cdk10).